Reading from the N-terminus, the 311-residue chain is Putative methylthioribose-1-phosphate isomerase (311 aa).

Residues 46–48, arginine 80, and glutamine 174 contribute to the substrate site; that span reads RGA. Residue aspartate 215 is the Proton donor of the active site. Position 224–225 (224–225) interacts with substrate; that stretch reads NK.

Belongs to the eIF-2B alpha/beta/delta subunits family. MtnA subfamily.

The catalysed reaction is 5-(methylsulfanyl)-alpha-D-ribose 1-phosphate = 5-(methylsulfanyl)-D-ribulose 1-phosphate. In terms of biological role, catalyzes the interconversion of methylthioribose-1-phosphate (MTR-1-P) into methylthioribulose-1-phosphate (MTRu-1-P). In Methanothermobacter thermautotrophicus (strain ATCC 29096 / DSM 1053 / JCM 10044 / NBRC 100330 / Delta H) (Methanobacterium thermoautotrophicum), this protein is Putative methylthioribose-1-phosphate isomerase.